A 356-amino-acid chain; its full sequence is Phosphoribosyl pyrophosphate synthase-associated protein 1 (356 aa).

Met-1 bears the N-acetylmethionine mark. Ser-177 and Ser-215 each carry phosphoserine.

The protein belongs to the ribose-phosphate pyrophosphokinase family. As to quaternary structure, binds to PRPS1 and PRPS2. Ubiquitous.

Functionally, seems to play a negative regulatory role in 5-phosphoribose 1-diphosphate synthesis. The chain is Phosphoribosyl pyrophosphate synthase-associated protein 1 (Prpsap1) from Rattus norvegicus (Rat).